A 137-amino-acid chain; its full sequence is Putative pre-16S rRNA nuclease (137 aa).

It belongs to the YqgF nuclease family.

The protein localises to the cytoplasm. Functionally, could be a nuclease involved in processing of the 5'-end of pre-16S rRNA. The sequence is that of Putative pre-16S rRNA nuclease from Desulforamulus reducens (strain ATCC BAA-1160 / DSM 100696 / MI-1) (Desulfotomaculum reducens).